A 643-amino-acid polypeptide reads, in one-letter code: Protein disulfide-isomerase A4 (643 aa).

The N-terminal stretch at 1-20 (MKLRKAWLLVLLLALTQLLA) is a signal peptide. Thioredoxin domains are found at residues 21-167 (AASA…EVSQ) and 167-299 (QPDW…EFLK). The disordered stretch occupies residues 24–58 (AEDAHEDASDSENPIEDDDDEEEDEEDEDDLEVKE). Acidic residues predominate over residues 32–56 (SDSENPIEDDDDEEEDEEDEDDLEV). A CXXC motif is present at residues 89-92 (CGHC). 2 disulfides stabilise this stretch: Cys89-Cys92 and Cys204-Cys207. Lys364 carries the N6-acetyllysine modification. In terms of domain architecture, Thioredoxin 3 spans 503–634 (FKKGKLKPVI…LSKFIDEHAT (132 aa)). The short motif at 553–556 (CGHC) is the CXXC element. Cys553 and Cys556 are joined by a disulfide. A Prevents secretion from ER motif is present at residues 640-643 (KEEL).

This sequence belongs to the protein disulfide isomerase family. In terms of assembly, part of a large chaperone multiprotein complex comprising DNAJB11, HSP90B1, HSPA5, HYOU, PDIA2, PDIA4, PDIA6, PPIB, SDF2L1, UGGT1 and very small amounts of ERP29, but not, or at very low levels, CALR nor CANX. Component of a complex containing at least CRELD2, MANF, MATN3 and PDIA4. O-glycosylated.

Its subcellular location is the endoplasmic reticulum lumen. It localises to the melanosome. It catalyses the reaction Catalyzes the rearrangement of -S-S- bonds in proteins.. This is Protein disulfide-isomerase A4 (Pdia4) from Rattus norvegicus (Rat).